The chain runs to 339 residues: Paired box protein Pax-9 (339 aa).

Residues 2–128 (AFGEVNQLGG…SSISRILRNK (127 aa)) constitute a DNA-binding region (paired). Residues 5-61 (EVNQLGGVFVNGRPLPNAIRLRIVELAQLGIRPCDISRQLRVSHGCVSKILARYNET) form a PAI subdomain region. The segment at 80–128 (TVVKHIRTYKQRDPGIFAWEIRDRLLADGVCDKYNVPSVSSISRILRNK) is RED subdomain.

It localises to the nucleus. In Gallus gallus (Chicken), this protein is Paired box protein Pax-9 (PAX9).